The sequence spans 424 residues: Serine hydroxymethyltransferase (424 aa).

(6S)-5,6,7,8-tetrahydrofolate is bound by residues leucine 118 and 122-124 (GHL). N6-(pyridoxal phosphate)lysine is present on lysine 227. Residue 351–353 (SPF) coordinates (6S)-5,6,7,8-tetrahydrofolate.

It belongs to the SHMT family. In terms of assembly, homodimer. It depends on pyridoxal 5'-phosphate as a cofactor.

The protein localises to the cytoplasm. The catalysed reaction is (6R)-5,10-methylene-5,6,7,8-tetrahydrofolate + glycine + H2O = (6S)-5,6,7,8-tetrahydrofolate + L-serine. It functions in the pathway one-carbon metabolism; tetrahydrofolate interconversion. Its pathway is amino-acid biosynthesis; glycine biosynthesis; glycine from L-serine: step 1/1. In terms of biological role, catalyzes the reversible interconversion of serine and glycine with tetrahydrofolate (THF) serving as the one-carbon carrier. This reaction serves as the major source of one-carbon groups required for the biosynthesis of purines, thymidylate, methionine, and other important biomolecules. Also exhibits THF-independent aldolase activity toward beta-hydroxyamino acids, producing glycine and aldehydes, via a retro-aldol mechanism. This chain is Serine hydroxymethyltransferase, found in Pseudothermotoga lettingae (strain ATCC BAA-301 / DSM 14385 / NBRC 107922 / TMO) (Thermotoga lettingae).